We begin with the raw amino-acid sequence, 215 residues long: GTP-binding nuclear protein Ran (215 aa).

In terms of domain architecture, Small GTPase Ran-type spans 6–170 (DIPTFKLVLV…LWLARKLLGD (165 aa)). Residues 17 to 24 (DGGTGKTT), 35 to 41 (EKKYVAT), Gly-67, 121 to 124 (NKVD), and 149 to 151 (SAK) contribute to the GTP site. Residues 36 to 44 (KKYVATLGV) are switch-I. The interval 67–83 (GQEKFGGLRDGYYIQGQ) is switch-II.

The protein belongs to the small GTPase superfamily. Ran family. In terms of assembly, found in a nuclear export complex with RanGTP, exportin and pre-miRNA.

It localises to the nucleus. In terms of biological role, GTP-binding protein involved in nucleocytoplasmic transport. Required for the import of protein into the nucleus and also for RNA export. Involved in chromatin condensation and control of cell cycle. This is GTP-binding nuclear protein Ran from Brugia malayi (Filarial nematode worm).